We begin with the raw amino-acid sequence, 456 residues long: tRNA modification GTPase MnmE (456 aa).

(6S)-5-formyl-5,6,7,8-tetrahydrofolate is bound by residues Lys29, Glu87, and Arg126. The region spanning 222 to 380 (GYKLAIIGRP…LLSLLASWLD (159 aa)) is the TrmE-type G domain. Asn232 contributes to the K(+) binding site. GTP-binding positions include 232–237 (NVGKSS), 251–257 (SDIPGTT), and 276–279 (DTAG). Residue Ser236 coordinates Mg(2+). Positions 251, 253, and 256 each coordinate K(+). Residue Thr257 coordinates Mg(2+). Lys456 serves as a coordination point for (6S)-5-formyl-5,6,7,8-tetrahydrofolate.

This sequence belongs to the TRAFAC class TrmE-Era-EngA-EngB-Septin-like GTPase superfamily. TrmE GTPase family. Homodimer. Heterotetramer of two MnmE and two MnmG subunits. Requires K(+) as cofactor.

It is found in the cytoplasm. Functionally, exhibits a very high intrinsic GTPase hydrolysis rate. Involved in the addition of a carboxymethylaminomethyl (cmnm) group at the wobble position (U34) of certain tRNAs, forming tRNA-cmnm(5)s(2)U34. The polypeptide is tRNA modification GTPase MnmE (Wolinella succinogenes (strain ATCC 29543 / DSM 1740 / CCUG 13145 / JCM 31913 / LMG 7466 / NCTC 11488 / FDC 602W) (Vibrio succinogenes)).